The following is a 130-amino-acid chain: Glycine cleavage system H protein (130 aa).

Positions 24-106 (TVTIGITDHA…YDDGWFFKVK (83 aa)) constitute a Lipoyl-binding domain. Residue lysine 65 is modified to N6-lipoyllysine.

It belongs to the GcvH family. In terms of assembly, the glycine cleavage system is composed of four proteins: P, T, L and H. (R)-lipoate is required as a cofactor.

Functionally, the glycine cleavage system catalyzes the degradation of glycine. The H protein shuttles the methylamine group of glycine from the P protein to the T protein. This is Glycine cleavage system H protein from Saccharophagus degradans (strain 2-40 / ATCC 43961 / DSM 17024).